A 179-amino-acid polypeptide reads, in one-letter code: MECMAVNDISYGREAEIWPRDYSMLARRVQFLRFNDIPVRLVSNNARIIIGYIAKFNPRENLILASDKPKGNKRIEVKLESLAILEELSGNDAFNLSLVPTDEFNLQQYTPSRRDYFSICNKCYKQGVGIKIYMKYGQVLTGKTTGVNACQVGVRTSNGNHMQVMFDWVSRITSSDYAE.

Its function is as follows. Transcriptional repressor of the FliC phase-1 flagellin. This chain is Repressor of phase 1 flagellin gene (fljA), found in Salmonella abony.